Consider the following 1450-residue polypeptide: Arf-GAP with Rho-GAP domain, ANK repeat and PH domain-containing protein 1 (1450 aa).

The region spanning 6–70 is the SAM domain; that stretch reads DAALSVAEWL…LAGLLRAHTS (65 aa). A required for interaction with SH3KBP1 region spans residues 81-90; sequence PVPMKRHIFR. Disordered stretches follow at residues 89–144 and 173–302; these read FRSP…LPPL and TKEE…SSLS. A compositionally biased stretch (pro residues) spans 92 to 102; the sequence is PPVPATPPEPL. The segment covering 190-199 has biased composition (low complexity); the sequence is QSEEPLSTLP. Residues 200-219 are compositionally biased toward pro residues; the sequence is QGPPQPPSPPPCPPEIPPKP. 2 stretches are compositionally biased toward acidic residues: residues 225–236 and 269–286; these read EFDDSDYDEVPE and EGEE…EDDH. The residue at position 229 (serine 229) is a Phosphoserine. Tyrosine 231 bears the Phosphotyrosine; by PTK6 mark. Positions 327-419 constitute a PH 1 domain; sequence PVIKAGWLDK…WMQALQQAMA (93 aa). Position 354 is a phosphothreonine (threonine 354). The residue at position 428 (serine 428) is a Phosphoserine. A phosphotyrosine mark is found at tyrosine 431 and tyrosine 504. The 90-residue stretch at 440–529 folds into the PH 2 domain; the sequence is QPDRAGSLEL…WLEAMQGAIA (90 aa). The 126-residue stretch at 535-660 folds into the Arf-GAP domain; that stretch reads SEVAERIWAA…RYHPLFGNQE (126 aa). Residues 550–576 form a C4-type zinc finger; the sequence is CADCGAPQPDWASINLCVVICKRCAGE. Serine 738 bears the Phosphoserine mark. Residues 743 to 850 form the PH 3 domain; it reads TVSHSGFLYK…WVKCIAKAFV (108 aa). Positions 954-1139 constitute a Rho-GAP domain; it reads ASMGDTLSEQ…DLINHYVVVF (186 aa). The Ras-associating domain occupies 1172-1261; it reads GDFICTVYLE…SHLVVKKHQA (90 aa). Positions 1274–1396 constitute a PH 4 domain; the sequence is GDTKHGMMKF…WFATFLFVQH (123 aa). Residues serine 1428 and serine 1435 each carry the phosphoserine modification.

In terms of assembly, interacts with SH3KBP1/CIN85 (via SH3 domains). The interaction is independent of EGF and does not affect ARAP1 GTPase-activating activity but is involved in regulating ubiquitination and endocytic trafficking of EGFR. ARAP1 competes with E3 ubiquitin-protein ligase CBL for binding to SH3KBP1, preventing interaction of CBL with SH3KBP1; this is likely to regulate SH3KBP1-mediated internalization of EGFR. Interacts with TNFRSF10A. Phosphorylated by PTK6 following EGF stimulation which enhances EGFR signaling by delaying EGFR down-regulation; the interaction is mediated by the SH2 domain of PTK6. Phosphorylation promotes association with the Golgi apparatus and endosomes. Detected in heart, skeletal muscle, spleen, kidney, liver, placenta, lung, peripheral blood leukocytes, adrenal gland, bone marrow, brain, lymph node, mammary gland, prostate, spinal cord, stomach, thyroid and trachea.

Its subcellular location is the cytoplasm. The protein localises to the golgi apparatus. It localises to the trans-Golgi network. The protein resides in the golgi stack. It is found in the cell membrane. Its subcellular location is the endosome. The protein localises to the multivesicular body. It localises to the cell projection. The protein resides in the ruffle. It is found in the podosome. Its subcellular location is the early endosome. Its function is as follows. Phosphatidylinositol 3,4,5-trisphosphate-dependent GTPase-activating protein that modulates actin cytoskeleton remodeling by regulating ARF and RHO family members. Activated by phosphatidylinositol 3,4,5-trisphosphate (PtdIns(3,4,5)P3) binding and, to a lesser extent, by phosphatidylinositol 3,4-bisphosphate (PtdIns(3,4)P2) binding. Has a preference for ARF1 and ARF5. Positively regulates the ring size of circular dorsal ruffles and promotes macropinocytosis. Acts as a bridging factor in osteoclasts to control actin and membrane dynamics. Regulates the condensing of osteoclast podosomes into sealing zones which segregate the bone-facing membrane from other membrane domains and are required for osteoclast resorption activity. Also regulates recruitment of the AP-3 complex to endosomal membranes and trafficking of lysosomal membrane proteins to the ruffled membrane border of osteoclasts to modulate bone resorption. Regulates the endocytic trafficking of EGFR. Regulates the incorporation of CD63 and CD9 into multivesicular bodies. Required in the retinal pigment epithelium (RPE) for photoreceptor survival due to its role in promoting RPE phagocytosis. This Homo sapiens (Human) protein is Arf-GAP with Rho-GAP domain, ANK repeat and PH domain-containing protein 1 (ARAP1).